Reading from the N-terminus, the 275-residue chain is uncharacterized protein (275 aa).

The protein belongs to the SMP-30/CGR1 family.

This is an uncharacterized protein from Sulfolobus acidocaldarius (strain ATCC 33909 / DSM 639 / JCM 8929 / NBRC 15157 / NCIMB 11770).